Reading from the N-terminus, the 231-residue chain is Dihydropteridine reductase (231 aa).

6-30 contacts NADP(+); the sequence is LVLGGSGALGAEVVKFFKSKSWNTI. The active-site Proton acceptor is the tyrosine 138.

Belongs to the short-chain dehydrogenases/reductases (SDR) family. As to quaternary structure, homodimer.

The catalysed reaction is 5,6,7,8-tetrahydropteridine + NAD(+) = 6,7-dihydropteridine + NADH + H(+). It catalyses the reaction 5,6,7,8-tetrahydropteridine + NADP(+) = 6,7-dihydropteridine + NADPH + H(+). Functionally, the product of this enzyme, tetrahydrobiopterin (BH-4), is an essential cofactor for phenylalanine, tyrosine, and tryptophan hydroxylases. The chain is Dihydropteridine reductase (qdpr) from Dictyostelium discoideum (Social amoeba).